A 137-amino-acid chain; its full sequence is Sec-independent protein translocase protein TatB (137 aa).

A helical membrane pass occupies residues 2-22 (FANIGWGEMLILVIAGLVILG). A disordered region spans residues 92-137 (FFTGKFDQQNGKPAAGQEKPVTPVNPPVTATPPSESTATPFDSDAT). Residues 122–131 (TPPSESTATP) show a composition bias toward low complexity.

This sequence belongs to the TatB family. The Tat system comprises two distinct complexes: a TatABC complex, containing multiple copies of TatA, TatB and TatC subunits, and a separate TatA complex, containing only TatA subunits. Substrates initially bind to the TatABC complex, which probably triggers association of the separate TatA complex to form the active translocon.

The protein resides in the cell membrane. Part of the twin-arginine translocation (Tat) system that transports large folded proteins containing a characteristic twin-arginine motif in their signal peptide across membranes. Together with TatC, TatB is part of a receptor directly interacting with Tat signal peptides. TatB may form an oligomeric binding site that transiently accommodates folded Tat precursor proteins before their translocation. This chain is Sec-independent protein translocase protein TatB, found in Mycobacterium sp. (strain JLS).